We begin with the raw amino-acid sequence, 157 residues long: Small ribosomal subunit protein uS7 (157 aa).

The protein belongs to the universal ribosomal protein uS7 family. In terms of assembly, part of the 30S ribosomal subunit. Contacts proteins S9 and S11.

Its function is as follows. One of the primary rRNA binding proteins, it binds directly to 16S rRNA where it nucleates assembly of the head domain of the 30S subunit. Is located at the subunit interface close to the decoding center, probably blocks exit of the E-site tRNA. This chain is Small ribosomal subunit protein uS7, found in Protochlamydia amoebophila (strain UWE25).